A 242-amino-acid chain; its full sequence is 3-deoxy-manno-octulosonate cytidylyltransferase (242 aa).

It belongs to the KdsB family.

Its subcellular location is the cytoplasm. It carries out the reaction 3-deoxy-alpha-D-manno-oct-2-ulosonate + CTP = CMP-3-deoxy-beta-D-manno-octulosonate + diphosphate. It functions in the pathway nucleotide-sugar biosynthesis; CMP-3-deoxy-D-manno-octulosonate biosynthesis; CMP-3-deoxy-D-manno-octulosonate from 3-deoxy-D-manno-octulosonate and CTP: step 1/1. Its pathway is bacterial outer membrane biogenesis; lipopolysaccharide biosynthesis. Functionally, activates KDO (a required 8-carbon sugar) for incorporation into bacterial lipopolysaccharide in Gram-negative bacteria. The sequence is that of 3-deoxy-manno-octulosonate cytidylyltransferase from Anaeromyxobacter sp. (strain K).